Reading from the N-terminus, the 300-residue chain is GTPase Era (300 aa).

In terms of domain architecture, Era-type G spans Arg-8 to Glu-176. The G1 stretch occupies residues Gly-16–Ser-23. Gly-16–Ser-23 contributes to the GTP binding site. A G2 region spans residues Gln-42–His-46. The G3 stretch occupies residues Asp-63–Gly-66. Residues Asp-63–Met-67 and Asn-125–Asp-128 contribute to the GTP site. A G4 region spans residues Asn-125–Asp-128. A G5 region spans residues Ile-155 to Ala-157. Positions Val-199–Gly-283 constitute a KH type-2 domain.

It belongs to the TRAFAC class TrmE-Era-EngA-EngB-Septin-like GTPase superfamily. Era GTPase family. Monomer.

The protein resides in the cytoplasm. Its subcellular location is the cell inner membrane. In terms of biological role, an essential GTPase that binds both GDP and GTP, with rapid nucleotide exchange. Plays a role in 16S rRNA processing and 30S ribosomal subunit biogenesis and possibly also in cell cycle regulation and energy metabolism. The sequence is that of GTPase Era from Pseudomonas syringae pv. tomato (strain ATCC BAA-871 / DC3000).